Reading from the N-terminus, the 292-residue chain is Elongation factor Ts (292 aa).

Residues 81–84 (TDFV) are involved in Mg(2+) ion dislocation from EF-Tu.

This sequence belongs to the EF-Ts family.

The protein localises to the cytoplasm. Functionally, associates with the EF-Tu.GDP complex and induces the exchange of GDP to GTP. It remains bound to the aminoacyl-tRNA.EF-Tu.GTP complex up to the GTP hydrolysis stage on the ribosome. This is Elongation factor Ts from Psychromonas ingrahamii (strain DSM 17664 / CCUG 51855 / 37).